A 413-amino-acid chain; its full sequence is Multifunctional CCA protein (413 aa).

2 residues coordinate ATP: glycine 8 and arginine 11. CTP-binding residues include glycine 8 and arginine 11. The Mg(2+) site is built by aspartate 21 and aspartate 23. ATP is bound by residues arginine 91, arginine 137, and arginine 140. 3 residues coordinate CTP: arginine 91, arginine 137, and arginine 140. Residues 228–329 enclose the HD domain; sequence TGIHTLMVLA…LKVFDKADAW (102 aa).

Belongs to the tRNA nucleotidyltransferase/poly(A) polymerase family. Bacterial CCA-adding enzyme type 1 subfamily. Monomer. Can also form homodimers and oligomers. Mg(2+) serves as cofactor. Requires Ni(2+) as cofactor.

It carries out the reaction a tRNA precursor + 2 CTP + ATP = a tRNA with a 3' CCA end + 3 diphosphate. The enzyme catalyses a tRNA with a 3' CCA end + 2 CTP + ATP = a tRNA with a 3' CCACCA end + 3 diphosphate. Its function is as follows. Catalyzes the addition and repair of the essential 3'-terminal CCA sequence in tRNAs without using a nucleic acid template. Adds these three nucleotides in the order of C, C, and A to the tRNA nucleotide-73, using CTP and ATP as substrates and producing inorganic pyrophosphate. tRNA 3'-terminal CCA addition is required both for tRNA processing and repair. Also involved in tRNA surveillance by mediating tandem CCA addition to generate a CCACCA at the 3' terminus of unstable tRNAs. While stable tRNAs receive only 3'-terminal CCA, unstable tRNAs are marked with CCACCA and rapidly degraded. This chain is Multifunctional CCA protein, found in Aeromonas salmonicida (strain A449).